The sequence spans 303 residues: Mycothiol acetyltransferase (303 aa).

N-acetyltransferase domains lie at 10-156 (ALPG…LAVP) and 162-303 (LAVR…SGPR). Residue E41 coordinates 1D-myo-inositol 2-(L-cysteinylamino)-2-deoxy-alpha-D-glucopyranoside. Position 86 to 88 (86 to 88 (LLV)) interacts with acetyl-CoA. 1D-myo-inositol 2-(L-cysteinylamino)-2-deoxy-alpha-D-glucopyranoside is bound by residues E189, K228, and E235. Residues 239-241 (LGV) and 246-252 (SGAGLGR) each bind acetyl-CoA. Y272 contacts 1D-myo-inositol 2-(L-cysteinylamino)-2-deoxy-alpha-D-glucopyranoside. 277-282 (NLRAVR) serves as a coordination point for acetyl-CoA.

The protein belongs to the acetyltransferase family. MshD subfamily. In terms of assembly, monomer.

The catalysed reaction is 1D-myo-inositol 2-(L-cysteinylamino)-2-deoxy-alpha-D-glucopyranoside + acetyl-CoA = mycothiol + CoA + H(+). Its function is as follows. Catalyzes the transfer of acetyl from acetyl-CoA to desacetylmycothiol (Cys-GlcN-Ins) to form mycothiol. This chain is Mycothiol acetyltransferase, found in Kineococcus radiotolerans (strain ATCC BAA-149 / DSM 14245 / SRS30216).